A 409-amino-acid polypeptide reads, in one-letter code: L-cysteine:1D-myo-inositol 2-amino-2-deoxy-alpha-D-glucopyranoside ligase (409 aa).

Zn(2+) is bound at residue C43. L-cysteinyl-5'-AMP is bound by residues C43–T46, T58, and N81–T83. Positions I45–H55 match the 'HIGH' region motif. Residues E183 to P188 carry the 'ERGGDP' region motif. W224 contributes to the L-cysteinyl-5'-AMP binding site. C228 lines the Zn(2+) pocket. G246–D248 is an L-cysteinyl-5'-AMP binding site. H253 provides a ligand contact to Zn(2+). V280 contributes to the L-cysteinyl-5'-AMP binding site. The 'KMSKS' region motif lies at K286–S290.

This sequence belongs to the class-I aminoacyl-tRNA synthetase family. MshC subfamily. As to quaternary structure, monomer. The cofactor is Zn(2+).

The enzyme catalyses 1D-myo-inositol 2-amino-2-deoxy-alpha-D-glucopyranoside + L-cysteine + ATP = 1D-myo-inositol 2-(L-cysteinylamino)-2-deoxy-alpha-D-glucopyranoside + AMP + diphosphate + H(+). Functionally, catalyzes the ATP-dependent condensation of GlcN-Ins and L-cysteine to form L-Cys-GlcN-Ins. In Streptomyces scabiei (strain 87.22), this protein is L-cysteine:1D-myo-inositol 2-amino-2-deoxy-alpha-D-glucopyranoside ligase.